The following is a 198-amino-acid chain: Alpha1-proteinase inhibitor-degradation deficient protein 37 (198 aa).

Phosphoserine is present on S79.

Its subcellular location is the cytoplasm. In terms of biological role, involved in ER-associated protein degradation (ERAD). The sequence is that of Alpha1-proteinase inhibitor-degradation deficient protein 37 (ADD37) from Saccharomyces cerevisiae (strain ATCC 204508 / S288c) (Baker's yeast).